Consider the following 1076-residue polypeptide: Histone deacetylase 4 (1076 aa).

Residues 66-169 adopt a coiled-coil conformation; the sequence is REQQLQQELL…GKESAVASTE (104 aa). The interval 117–312 is interaction with MEF2A; that stretch reads MLAMKHQQEL…NSSSGNVSTE (196 aa). A compositionally biased stretch (basic and acidic residues) spans 132-162; that stretch reads KLERHRQEQELEKQHREQKLQQLKNKEKGKE. Disordered stretches follow at residues 132–166, 205–225, and 239–323; these read KLER…SAVA, TQHS…ASYN, and PLRK…PSAP. Residues 205-224 are compositionally biased toward polar residues; that stretch reads TQHSSLDQSSPPQSGVSASY. At S209 the chain carries Phosphoserine. S245 carries the phosphoserine; by CaMK4 and SIK1 modification. Residues 258-273 are compositionally biased toward basic and acidic residues; the sequence is KVAERRSSPLLRRKDG. The segment covering 289–310 has biased composition (low complexity); that stretch reads SACSSAPGSGPSSPNSSSGNVS. Residues 348–353 carry the PxLPxI/L motif; mediates interaction with ANKRA2 and 14-3-3 proteins motif; sequence PSLPNI. At S349 the chain carries Phosphoserine. A Phosphoserine; by CaMK4 and SIK1 modification is found at S465. 3 disordered regions span residues 506–529, 541–580, and 622–645; these read ISKP…ELRE, RLPG…QRPA, and RPLS…EPPT. Basic and acidic residues predominate over residues 514-529; that stretch reads RQPESHPEETEEELRE. K556 is covalently cross-linked (Glycyl lysine isopeptide (Lys-Gly) (interchain with G-Cter in SUMO)). S562 carries the post-translational modification Phosphoserine. Polar residues predominate over residues 626-638; the sequence is RAQSSPASATFPM. Position 629 is a phosphoserine; by CaMK4 (S629). S630 is modified (phosphoserine). Residues 652–1076 form a histone deacetylase region; sequence GLVYDTLMLK…EEPMEEEPPL (425 aa). Zn(2+)-binding residues include C664, C666, H672, and C743. H795 is an active-site residue. Positions 1043 to 1076 match the Nuclear export signal motif; sequence EEAETVTAMASLSVGVKPAEKRSEEEPMEEEPPL.

This sequence belongs to the histone deacetylase family. HD type 2 subfamily. Homodimer. Homodimerization via its N-terminal domain. Interacts with HDAC7. Interacts with MEF2A, MEF2C, MEF2D, MORC2 and NR2C1. Interacts with a 14-3-3 chaperone proteins in a phosphorylation dependent manner. Interacts with 14-3-3 protein YWHAB. Interacts with BTBD14B. Interacts with KDM5B. Interacts (via PxLPxI/L motif) with ANKRA2 (via ankyrin repeats). Interacts with CUL7 (as part of the 3M complex); negatively regulated by ANKRA2. Interacts with EP300 in the presence of TFAP2C. Interacts with AHRR. Interacts with MYOCD. Interacts with HSPA1A and HSPA1B leading to their deacetylation at 'Lys-77'. Interacts with ZBTB7B; the interaction allows the recruitment of HDAC4 on CD8 loci for deacetylation and possible inhibition of CD8 genes expression. Interacts with DHX36. Interacts with SIK3; this interaction leads to HDAC4 retention in the cytoplasm. Interacts with ZNF638. Phosphorylated by CaMK4 at Ser-245, Ser-465 and Ser-629. Phosphorylation at other residues by CaMK2D is required for the interaction with 14-3-3. Phosphorylation at Ser-349, within the PxLPxI/L motif, impairs the binding of ANKRA2 but generates a high-affinity docking site for 14-3-3. Post-translationally, sumoylation on Lys-556 is promoted by the E3 SUMO-protein ligase RANBP2, and prevented by phosphorylation by CaMK4.

It is found in the nucleus. The protein resides in the cytoplasm. The enzyme catalyses N(6)-acetyl-L-lysyl-[histone] + H2O = L-lysyl-[histone] + acetate. Functionally, responsible for the deacetylation of lysine residues on the N-terminal part of the core histones (H2A, H2B, H3 and H4). Histone deacetylation gives a tag for epigenetic repression and plays an important role in transcriptional regulation, cell cycle progression and developmental events. Histone deacetylases act via the formation of large multiprotein complexes. Involved in muscle maturation via its interaction with the myocyte enhancer factors such as MEF2A, MEF2C and MEF2D. Deacetylates HSPA1A and HSPA1A at 'Lys-77' leading to their preferential binding to co-chaperone STUB1. In Mus musculus (Mouse), this protein is Histone deacetylase 4 (Hdac4).